Here is a 1194-residue protein sequence, read N- to C-terminus: ATP-dependent RNA helicase DHX30 (1194 aa).

Residues 1–10 (MFSLDSFRKD) are compositionally biased toward basic and acidic residues. The interval 1-27 (MFSLDSFRKDRAQHRQRQCKLPPPRLP) is disordered. Ser6 and Arg15 each carry phosphoserine. One can recognise a DRBM domain in the interval 53-121 (PKNLLNSVIG…QAAAAACQLF (69 aa)). The tract at residues 150–199 (ADSWWRPEPTMPPTSWRQLNPESIRPGGPGGLSRSLGREEEEDEEEELEE) is disordered. Acidic residues predominate over residues 188–199 (EEEEDEEEELEE). Phosphoserine occurs at positions 226 and 380. The Helicase ATP-binding domain occupies 444–612 (LNAIEQHPVV…FGGCPVIKVP (169 aa)). 457–464 (GDTGCGKT) serves as a coordination point for ATP. The DEAH box signature appears at 559 to 562 (DEVH). Residues 654 to 827 (LVTDLVLHID…NLVLQAKIHM (174 aa)) form the Helicase C-terminal domain.

It belongs to the DEAD box helicase family. DEAH subfamily. Identified in a complex with TFAM and SSBP1. Interacts with AGO1 and AGO2. Interacts (via N-terminus) with ZC3HAV1 (via N-terminal domain) in an RNA-independent manner. Found in a complex with GRSF1, DDX28, FASTKD2 and FASTKD5. Post-translationally, phosphorylated on Ser-15.

Its subcellular location is the cytoplasm. The protein localises to the mitochondrion. It is found in the mitochondrion matrix. It localises to the mitochondrion nucleoid. It catalyses the reaction ATP + H2O = ADP + phosphate + H(+). Its function is as follows. RNA-dependent helicase. Plays an important role in the assembly of the mitochondrial large ribosomal subunit. Required for optimal function of the zinc-finger antiviral protein ZC3HAV1. Associates with mitochondrial DNA. Involved in nervous system development and differentiation through its involvement in the up-regulation of a number of genes which are required for neurogenesis, including GSC, NCAM1, neurogenin, and NEUROD. The chain is ATP-dependent RNA helicase DHX30 (DHX30) from Homo sapiens (Human).